The primary structure comprises 300 residues: Cysteine-rich venom protein (300 aa).

Residues Met-1–Gly-21 form the signal peptide. Residues Arg-22–Arg-24 constitute a propeptide that is removed on maturation. The SCP domain occupies Leu-62–Tyr-183.

In terms of processing, contains 11 disulfide bonds. As to expression, expressed by the venom duct.

Its subcellular location is the secreted. Protease responsible for cleaving the conotoxins from their propeptide precursors. The target propeptide requires minimum four residues including a leucine N-terminal of the cleavage site for efficient substrate processing (example: Xaa-Xaa-Xaa-Leu-Asn-Lys-Arg-toxin). This chain is Cysteine-rich venom protein, found in Conus textile (Cloth-of-gold cone).